Here is a 195-residue protein sequence, read N- to C-terminus: Glycerol-3-phosphate acyltransferase 2 (195 aa).

6 consecutive transmembrane segments (helical) span residues 4–24 (VVSLAVVFVLSYLLGSLVAGV), 52–72 (GAAAAVTLADILKGAAAVGLA), 73–93 (LWLAPQALPLATALATFGVVF), 115–135 (AMLVVAPWTLLATVTFALALI), 150–170 (AIPFATVVAVPVGLLIASRLG), and 171–191 (GGAEFLAGSAAMGIRAVHLLA).

Belongs to the PlsY family. Probably interacts with PlsX.

It localises to the cell membrane. It carries out the reaction an acyl phosphate + sn-glycerol 3-phosphate = a 1-acyl-sn-glycero-3-phosphate + phosphate. It functions in the pathway lipid metabolism; phospholipid metabolism. Catalyzes the transfer of an acyl group from acyl-phosphate (acyl-PO(4)) to glycerol-3-phosphate (G3P) to form lysophosphatidic acid (LPA). This enzyme utilizes acyl-phosphate as fatty acyl donor, but not acyl-CoA or acyl-ACP. The polypeptide is Glycerol-3-phosphate acyltransferase 2 (Deinococcus radiodurans (strain ATCC 13939 / DSM 20539 / JCM 16871 / CCUG 27074 / LMG 4051 / NBRC 15346 / NCIMB 9279 / VKM B-1422 / R1)).